Consider the following 475-residue polypeptide: Aspartyl/glutamyl-tRNA(Asn/Gln) amidotransferase subunit B (475 aa).

Belongs to the GatB/GatE family. GatB subfamily. Heterotrimer of A, B and C subunits.

It catalyses the reaction L-glutamyl-tRNA(Gln) + L-glutamine + ATP + H2O = L-glutaminyl-tRNA(Gln) + L-glutamate + ADP + phosphate + H(+). It carries out the reaction L-aspartyl-tRNA(Asn) + L-glutamine + ATP + H2O = L-asparaginyl-tRNA(Asn) + L-glutamate + ADP + phosphate + 2 H(+). In terms of biological role, allows the formation of correctly charged Asn-tRNA(Asn) or Gln-tRNA(Gln) through the transamidation of misacylated Asp-tRNA(Asn) or Glu-tRNA(Gln) in organisms which lack either or both of asparaginyl-tRNA or glutaminyl-tRNA synthetases. The reaction takes place in the presence of glutamine and ATP through an activated phospho-Asp-tRNA(Asn) or phospho-Glu-tRNA(Gln). In Lysinibacillus sphaericus (strain C3-41), this protein is Aspartyl/glutamyl-tRNA(Asn/Gln) amidotransferase subunit B.